The sequence spans 323 residues: Phospho-N-acetylmuramoyl-pentapeptide-transferase (323 aa).

9 helical membrane passes run 12 to 32 (IVMA…IIIP), 58 to 78 (PTIG…IMVG), 84 to 104 (AMIA…DDLL), 120 to 140 (MILL…YIGT), 151 to 171 (INFG…VTNA), 177 to 197 (GLDG…GIIS), 200 to 220 (LGHI…LAFL), 229 to 250 (VFMG…ALIL), and 303 to 323 (KIVS…FASL).

This sequence belongs to the glycosyltransferase 4 family. MraY subfamily. The cofactor is Mg(2+).

The protein localises to the cell membrane. The enzyme catalyses UDP-N-acetyl-alpha-D-muramoyl-L-alanyl-gamma-D-glutamyl-meso-2,6-diaminopimeloyl-D-alanyl-D-alanine + di-trans,octa-cis-undecaprenyl phosphate = di-trans,octa-cis-undecaprenyl diphospho-N-acetyl-alpha-D-muramoyl-L-alanyl-D-glutamyl-meso-2,6-diaminopimeloyl-D-alanyl-D-alanine + UMP. Its pathway is cell wall biogenesis; peptidoglycan biosynthesis. Catalyzes the initial step of the lipid cycle reactions in the biosynthesis of the cell wall peptidoglycan: transfers peptidoglycan precursor phospho-MurNAc-pentapeptide from UDP-MurNAc-pentapeptide onto the lipid carrier undecaprenyl phosphate, yielding undecaprenyl-pyrophosphoryl-MurNAc-pentapeptide, known as lipid I. This is Phospho-N-acetylmuramoyl-pentapeptide-transferase from Clostridium perfringens (strain ATCC 13124 / DSM 756 / JCM 1290 / NCIMB 6125 / NCTC 8237 / Type A).